Reading from the N-terminus, the 391-residue chain is 1-deoxy-D-xylulose 5-phosphate reductoisomerase (391 aa).

NADPH contacts are provided by Thr11, Gly12, Ser13, Ile14, Gly37, Asn39, and Asn125. Lys126 is a binding site for 1-deoxy-D-xylulose 5-phosphate. Glu127 is a binding site for NADPH. Asp151 contacts Mn(2+). The 1-deoxy-D-xylulose 5-phosphate site is built by Ser152, Glu153, Ser176, and His199. Glu153 contacts Mn(2+). Gly205 is a binding site for NADPH. Positions 212, 217, 218, and 221 each coordinate 1-deoxy-D-xylulose 5-phosphate. Glu221 is a Mn(2+) binding site.

Belongs to the DXR family. It depends on Mg(2+) as a cofactor. Requires Mn(2+) as cofactor.

It catalyses the reaction 2-C-methyl-D-erythritol 4-phosphate + NADP(+) = 1-deoxy-D-xylulose 5-phosphate + NADPH + H(+). Its pathway is isoprenoid biosynthesis; isopentenyl diphosphate biosynthesis via DXP pathway; isopentenyl diphosphate from 1-deoxy-D-xylulose 5-phosphate: step 1/6. Functionally, catalyzes the NADPH-dependent rearrangement and reduction of 1-deoxy-D-xylulose-5-phosphate (DXP) to 2-C-methyl-D-erythritol 4-phosphate (MEP). The chain is 1-deoxy-D-xylulose 5-phosphate reductoisomerase from Heliobacterium modesticaldum (strain ATCC 51547 / Ice1).